We begin with the raw amino-acid sequence, 411 residues long: Stearoyl-[acyl-carrier-protein] 9-desaturase 2, chloroplastic (411 aa).

The transit peptide at Met1–Val44 directs the protein to the chloroplast. 6 residues coordinate Fe cation: Glu148, Glu186, His189, Glu239, Glu272, and His275.

It belongs to the fatty acid desaturase type 2 family. In terms of assembly, homodimer. Fe(2+) is required as a cofactor. Preferentially expressed in roots and flowers.

It is found in the plastid. The protein resides in the chloroplast. The enzyme catalyses octadecanoyl-[ACP] + 2 reduced [2Fe-2S]-[ferredoxin] + O2 + 2 H(+) = (9Z)-octadecenoyl-[ACP] + 2 oxidized [2Fe-2S]-[ferredoxin] + 2 H2O. It functions in the pathway lipid metabolism; fatty acid metabolism. Its function is as follows. Converts stearoyl-ACP to oleoyl-ACP by introduction of a cis double bond between carbons 9 and 10 of the acyl chain. Exhibits delta-9 palmitoyl-[acyl-carrier-protein] desaturase (PAD) activity. Involved in omega-7 monounsaturated fatty acid biosynthesis, especially in the endosperm oil. This chain is Stearoyl-[acyl-carrier-protein] 9-desaturase 2, chloroplastic (S-ACP-DES2), found in Arabidopsis thaliana (Mouse-ear cress).